Reading from the N-terminus, the 150-residue chain is Transcription antitermination protein NusB (150 aa).

This sequence belongs to the NusB family.

Involved in transcription antitermination. Required for transcription of ribosomal RNA (rRNA) genes. Binds specifically to the boxA antiterminator sequence of the ribosomal RNA (rrn) operons. This is Transcription antitermination protein NusB from Chloroflexus aggregans (strain MD-66 / DSM 9485).